The following is a 289-amino-acid chain: Xyloglucan endotransglucosylase/hydrolase protein 15 (289 aa).

The signal sequence occupies residues 1–25 (MGPSSSLTTIVATVLLVTLFGSAYA). In terms of domain architecture, GH16 spans 26–216 (SNFFDEFDLT…WSKAPFTAYY (191 aa)). The Nucleophile role is filled by glutamate 102. The active-site Proton donor is glutamate 106. Glutamate 106 is a xyloglucan binding site. Asparagine 110 is a glycosylation site (N-linked (GlcNAc...) asparagine). Residues 119–121 (HTN), 129–131 (DRE), 195–196 (DW), and glycine 200 each bind xyloglucan. Disulfide bonds link cysteine 224–cysteine 230 and cysteine 270–cysteine 284. A xyloglucan-binding site is contributed by arginine 275.

Belongs to the glycosyl hydrolase 16 family. XTH group 2 subfamily. Contains at least one intrachain disulfide bond essential for its enzymatic activity. As to expression, strongly expressed in roots, hypocotyls and cotyledons. Aslo detected in inflorescence stems and in the carpels and styles in flowers.

The protein localises to the secreted. It is found in the cell wall. Its subcellular location is the extracellular space. The protein resides in the apoplast. The catalysed reaction is breaks a beta-(1-&gt;4) bond in the backbone of a xyloglucan and transfers the xyloglucanyl segment on to O-4 of the non-reducing terminal glucose residue of an acceptor, which can be a xyloglucan or an oligosaccharide of xyloglucan.. It carries out the reaction xyloglucan + H2O = xyloglucan oligosaccharides.. Its function is as follows. Catalyzes xyloglucan endohydrolysis (XEH) and/or endotransglycosylation (XET). Cleaves and religates xyloglucan polymers, an essential constituent of the primary cell wall, and thereby participates in cell wall construction of growing tissues. Has a high XET activity, but little or no XEH activity in vitro. Acceptor preferences are XXXGol &gt; XLLGol = XLFGol &gt; XXLGol &gt; XXFGol. This chain is Xyloglucan endotransglucosylase/hydrolase protein 15, found in Arabidopsis thaliana (Mouse-ear cress).